We begin with the raw amino-acid sequence, 517 residues long: GMP synthase [glutamine-hydrolyzing] (517 aa).

A Glutamine amidotransferase type-1 domain is found at 11–202; that stretch reads KIIALDFGSQ…AFDVCGAKAN (192 aa). The active-site Nucleophile is the Cys-88. Catalysis depends on residues His-176 and Glu-178. The GMPS ATP-PPase domain maps to 203–392; sequence WTMDDFIDMQ…LGIPHELVWR (190 aa). 230 to 236 is a binding site for ATP; sequence SGGVDSS.

In terms of assembly, homodimer.

The catalysed reaction is XMP + L-glutamine + ATP + H2O = GMP + L-glutamate + AMP + diphosphate + 2 H(+). Its pathway is purine metabolism; GMP biosynthesis; GMP from XMP (L-Gln route): step 1/1. Its function is as follows. Catalyzes the synthesis of GMP from XMP. This is GMP synthase [glutamine-hydrolyzing] from Limosilactobacillus reuteri (strain DSM 20016) (Lactobacillus reuteri).